A 368-amino-acid polypeptide reads, in one-letter code: Alanine racemase (368 aa).

The active-site Proton acceptor; specific for D-alanine is Lys40. N6-(pyridoxal phosphate)lysine is present on Lys40. A substrate-binding site is contributed by Arg136. Catalysis depends on Tyr263, which acts as the Proton acceptor; specific for L-alanine. Residue Met310 coordinates substrate.

Belongs to the alanine racemase family. Requires pyridoxal 5'-phosphate as cofactor.

It catalyses the reaction L-alanine = D-alanine. It functions in the pathway amino-acid biosynthesis; D-alanine biosynthesis; D-alanine from L-alanine: step 1/1. Catalyzes the interconversion of L-alanine and D-alanine. May also act on other amino acids. The polypeptide is Alanine racemase (alr) (Streptococcus gordonii (strain Challis / ATCC 35105 / BCRC 15272 / CH1 / DL1 / V288)).